Reading from the N-terminus, the 419-residue chain is GTPase Obg (419 aa).

In terms of domain architecture, Obg spans 1–158 (MHFVDEAFNE…FKIKTELKVL (158 aa)). The OBG-type G domain maps to 159–324 (ADIGLLGFPS…LKYKMSSFLQ (166 aa)). GTP contacts are provided by residues 165-172 (GFPSVGKS), 190-194 (FTTIK), 211-214 (DLPG), 278-281 (NKMD), and 305-307 (SLV). Mg(2+)-binding residues include Ser-172 and Thr-192. The region spanning 342-419 (TLTDNLKTIS…KICDRLFDFL (78 aa)) is the OCT domain.

This sequence belongs to the TRAFAC class OBG-HflX-like GTPase superfamily. OBG GTPase family. Monomer. The cofactor is Mg(2+).

The protein localises to the cytoplasm. An essential GTPase which binds GTP, GDP and possibly (p)ppGpp with moderate affinity, with high nucleotide exchange rates and a fairly low GTP hydrolysis rate. Plays a role in control of the cell cycle, stress response, ribosome biogenesis and in those bacteria that undergo differentiation, in morphogenesis control. In Aster yellows witches'-broom phytoplasma (strain AYWB), this protein is GTPase Obg.